Here is a 241-residue protein sequence, read N- to C-terminus: Small ribosomal subunit protein eS4 (241 aa).

One can recognise an S4 RNA-binding domain in the interval 43–105 (IPLVMVLRDI…INKTFRVLQD (63 aa)).

Belongs to the eukaryotic ribosomal protein eS4 family.

The polypeptide is Small ribosomal subunit protein eS4 (Methanosphaera stadtmanae (strain ATCC 43021 / DSM 3091 / JCM 11832 / MCB-3)).